We begin with the raw amino-acid sequence, 387 residues long: Protein disulfide isomerase pTAC5, chloroplastic (387 aa).

Residues 1-40 (MASSSLPLSLPFPLRSLTSTTRSLPFQCSPLFFSIPSSIV) constitute a chloroplast transit peptide. Coiled-coil stretches lie at residues 72–106 (EQRW…LGNS) and 143–163 (REQI…AEEK). A CR-type zinc finger spans residues 318–387 (PVDRSESTNT…CDVCDGKKNL (70 aa)).

In terms of assembly, interacts with HSP21; the formed complex associates with the plastid-encoded RNA polymerase (PEP) complex not only during transcription initiation, but also during elongation and termination, and with a stronger efficiency in illuminated chloroplasts. Binds to promoter regions of PEP-dependent genes, especially after a heat stress. Interacts with FLN2.

Its subcellular location is the plastid. It is found in the chloroplast stroma. The protein resides in the chloroplast nucleoid. The catalysed reaction is Catalyzes the rearrangement of -S-S- bonds in proteins.. In terms of biological role, exhibits zinc-dependent disulfide isomerase activity. Required for seedling and chloroplast development under heat stress, probably by maintaining plastid-encoded RNA polymerase (PEP)-dependent transcription. The sequence is that of Protein disulfide isomerase pTAC5, chloroplastic from Arabidopsis thaliana (Mouse-ear cress).